A 247-amino-acid chain; its full sequence is Triosephosphate isomerase (247 aa).

Substrate is bound by residues asparagine 10 and lysine 12. Histidine 94 functions as the Electrophile in the catalytic mechanism. The Proton acceptor role is filled by glutamate 164.

It belongs to the triosephosphate isomerase family. In terms of assembly, homodimer.

The catalysed reaction is D-glyceraldehyde 3-phosphate = dihydroxyacetone phosphate. The protein operates within carbohydrate biosynthesis; gluconeogenesis. Its pathway is carbohydrate degradation; glycolysis; D-glyceraldehyde 3-phosphate from glycerone phosphate: step 1/1. The chain is Triosephosphate isomerase (Tpi) from Culex tarsalis (Encephalitis mosquito).